Consider the following 430-residue polypeptide: Enolase (430 aa).

Q162 contributes to the (2R)-2-phosphoglycerate binding site. E204 serves as the catalytic Proton donor. Positions 241, 283, and 310 each coordinate Mg(2+). Residues K335, R364, S365, and K386 each contribute to the (2R)-2-phosphoglycerate site. K335 (proton acceptor) is an active-site residue.

The protein belongs to the enolase family. Mg(2+) is required as a cofactor.

Its subcellular location is the cytoplasm. It is found in the secreted. The protein resides in the cell surface. The enzyme catalyses (2R)-2-phosphoglycerate = phosphoenolpyruvate + H2O. The protein operates within carbohydrate degradation; glycolysis; pyruvate from D-glyceraldehyde 3-phosphate: step 4/5. In terms of biological role, catalyzes the reversible conversion of 2-phosphoglycerate (2-PG) into phosphoenolpyruvate (PEP). It is essential for the degradation of carbohydrates via glycolysis. The protein is Enolase of Mycobacteroides abscessus (strain ATCC 19977 / DSM 44196 / CCUG 20993 / CIP 104536 / JCM 13569 / NCTC 13031 / TMC 1543 / L948) (Mycobacterium abscessus).